The primary structure comprises 360 residues: Farnesyl pyrophosphate synthase (360 aa).

Positions 52, 55, and 90 each coordinate isopentenyl diphosphate. Mg(2+)-binding residues include Asp97 and Asp101. Arg106 provides a ligand contact to dimethylallyl diphosphate. Position 107 (Arg107) interacts with isopentenyl diphosphate. Dimethylallyl diphosphate is bound by residues Lys194, Thr195, Gln237, Lys254, and Lys263.

Belongs to the FPP/GGPP synthase family. Mg(2+) is required as a cofactor.

The enzyme catalyses isopentenyl diphosphate + dimethylallyl diphosphate = (2E)-geranyl diphosphate + diphosphate. It catalyses the reaction isopentenyl diphosphate + (2E)-geranyl diphosphate = (2E,6E)-farnesyl diphosphate + diphosphate. It functions in the pathway isoprenoid biosynthesis; farnesyl diphosphate biosynthesis; farnesyl diphosphate from geranyl diphosphate and isopentenyl diphosphate: step 1/1. It participates in isoprenoid biosynthesis; geranyl diphosphate biosynthesis; geranyl diphosphate from dimethylallyl diphosphate and isopentenyl diphosphate: step 1/1. In terms of biological role, farnesyl pyrophosphate synthase; part of the second module of ergosterol biosynthesis pathway that includes the middle steps of the pathway. The second module involves the formation of farnesyl diphosphate, which is also an important intermediate in the biosynthesis of ubiquinone, dolichol, heme and prenylated proteins. This module also plays a key role in the biosynthesis of triterpenes such as ganoderic acids (GA), a group of highly oxygenated lanostane-type triterpenoids which are well recognized as a main group of unique bioactive compounds in the medicinal mushroom Ganoderma lucidum. Activity by the mevalonate kinase first converts mevalonate into 5-phosphomevalonate. 5-phosphomevalonate is then further converted to 5-diphosphomevalonate by the phosphomevalonate kinase. The diphosphomevalonate decarboxylase MVD then produces isopentenyl diphosphate. The isopentenyl-diphosphate delta-isomerase then catalyzes the 1,3-allylic rearrangement of the homoallylic substrate isopentenyl (IPP) to its highly electrophilic allylic isomer, dimethylallyl diphosphate (DMAPP). Finally the farnesyl diphosphate synthase FPS catalyzes the sequential condensation of isopentenyl pyrophosphate with dimethylallyl pyrophosphate, and then with the resultant geranylpyrophosphate to the ultimate product farnesyl pyrophosphate. This is Farnesyl pyrophosphate synthase from Ganoderma lucidum (Ling zhi medicinal fungus).